The primary structure comprises 539 residues: Sporozoite-associated protein (539 aa).

5 N-linked (GlcNAc...) asparagine glycosylation sites follow: N31, N90, N102, N149, and N167. Residues 126 to 153 (LTQSPPPAAAPQSPSPRAILSPRNVSKT) form a disordered region. Positions 192-215 (VVAEKSNTPTTPKTTPNGKWTGKN) are enriched in low complexity. Residues 192–231 (VVAEKSNTPTTPKTTPNGKWTGKNANATIETSNTDHTPPS) are disordered. Residues 216 to 228 (ANATIETSNTDHT) show a composition bias toward polar residues. N-linked (GlcNAc...) asparagine glycans are attached at residues N217, N271, and N288. Residues 303-355 (TLISRAQDDKPGTKGGSDETSSSTAASNERQPMFPNDNDDDDIDQTYCPGVES) form a disordered region. Positions 320–332 (DETSSSTAASNER) are enriched in polar residues. Residues N427 and N503 are each glycosylated (N-linked (GlcNAc...) asparagine).

As to expression, saliva (at protein level). Female salivary gland. Female midgut.

It is found in the secreted. Functionally, binds heparan sulfate proteoglycans present on the mammalian cell surface. Modulates host immune responses at the site of inoculation via decreasing the expression of TNF-alpha/TNF, IL-1beta/IL1B, IFN-gamma/IFNG, IL4, MMP9, TGF-beta and ICAM1. (Microbial infection) Interacts with the surface of Plasmodium berghei sporozoites. Promotes Plasmodium berghei transmission to the mouse host. Does not affect Plasmodium berghei sporozoite viability. In terms of biological role, (Microbial infection) Interacts with the surface of Plasmodium falciparum sporozoites. In Anopheles gambiae (African malaria mosquito), this protein is Sporozoite-associated protein.